A 199-amino-acid chain; its full sequence is Small heat shock protein hspG4 (199 aa).

The sHSP domain maps to 30–199; the sequence is NKRVDIIPSM…SSNTIKININ (170 aa). Positions 83 to 105 are disordered; it reads KNQQQQQQQQQLENSNNKENDEP.

It belongs to the small heat shock protein (HSP20) family.

The polypeptide is Small heat shock protein hspG4 (hspG4) (Dictyostelium discoideum (Social amoeba)).